Reading from the N-terminus, the 240-residue chain is U1 small nuclear ribonucleoprotein C (240 aa).

Residues 4-36 (YYCEYCDIYLTHSSPVGRRQHIQGRKHISAKIE) form a Matrin-type zinc finger. Disordered regions lie at residues 86–122 (GMKHHSHYSRHSHRHHMSHGRYNRERHGHHSYSSKYH) and 175–240 (IDSD…SVDA). 2 stretches are compositionally biased toward basic and acidic residues: residues 178 to 194 (DPVKDSQNGERVGDNAI) and 203 to 219 (DQGDRGDLGDHADHADH). Polar residues predominate over residues 226 to 240 (TDGTANGNDQVSVDA).

Belongs to the U1 small nuclear ribonucleoprotein C family. U1 snRNP is composed of the 7 core Sm proteins B/B', D1, D2, D3, E, F and G that assemble in a heptameric protein ring on the Sm site of the small nuclear RNA to form the core snRNP, and at least 3 U1 snRNP-specific proteins U1-70K, U1-A and U1-C. U1-C interacts with U1 snRNA and the 5' splice-site region of the pre-mRNA.

The protein resides in the nucleus. Component of the spliceosomal U1 snRNP, which is essential for recognition of the pre-mRNA 5' splice-site and the subsequent assembly of the spliceosome. U1-C is directly involved in initial 5' splice-site recognition for both constitutive and regulated alternative splicing. The interaction with the 5' splice-site seems to precede base-pairing between the pre-mRNA and the U1 snRNA. Stimulates commitment or early (E) complex formation by stabilizing the base pairing of the 5' end of the U1 snRNA and the 5' splice-site region. The protein is U1 small nuclear ribonucleoprotein C of Plasmodium vivax (strain Salvador I).